The chain runs to 75 residues: Small ribosomal subunit protein bS16 (75 aa).

This sequence belongs to the bacterial ribosomal protein bS16 family.

This chain is Small ribosomal subunit protein bS16, found in Campylobacter fetus subsp. fetus (strain 82-40).